We begin with the raw amino-acid sequence, 370 residues long: MPHQQILMLFGLLPVATNISTWWNFGSMLLACLTLQLLTGFFLAVHYTANINLAFSSIIHITRDVPYGWMMQNLHAIGASMFFICIYIHIARGLYYGSYLNKETWLSGTTLLIMLMATAFFGYVLPWGQMSFWAATVITNLLTAIPYLGSTMTTWLWGGFAINDPTLTRFFALHFILPFGIISLSSLHILLLHEEGSSNPLGTNSDIDKIPFHPYQTYKDMLMLTIMTIMLLTIVSFFPDIFNDPDNFSKANPLVTPQHIKPEWYFLFAYGILRSIPNKLGGALALXMSIMILLTLPFTHTSKLRSMMFRPFMQLTFWTFTATFLVISWTATKPVEPPFTTISQVAALMYFLFFISNPIMGWLENKIMKL.

4 consecutive transmembrane segments (helical) span residues 25–45 (FGSM…FLAV), 69–90 (WMMQ…YIHI), 105–125 (WLSG…GYVL), and 170–190 (FFAL…LHIL). 2 residues coordinate heme b: histidine 75 and histidine 89. Positions 174 and 188 each coordinate heme b. A ubiquinone is bound at residue histidine 193. 4 helical membrane passes run 218–238 (YKDM…VSFF), 280–300 (LGGA…PFTH), 312–332 (FMQL…WTAT), and 339–358 (FTTI…ISNP).

This sequence belongs to the cytochrome b family. As to quaternary structure, the cytochrome bc1 complex contains 3 respiratory subunits (MT-CYB, CYC1 and UQCRFS1), 2 core proteins (UQCRC1 and UQCRC2) and probably 6 low-molecular weight proteins. It depends on heme b as a cofactor.

Its subcellular location is the mitochondrion inner membrane. Component of the ubiquinol-cytochrome c reductase complex (complex III or cytochrome b-c1 complex) that is part of the mitochondrial respiratory chain. The b-c1 complex mediates electron transfer from ubiquinol to cytochrome c. Contributes to the generation of a proton gradient across the mitochondrial membrane that is then used for ATP synthesis. The sequence is that of Cytochrome b (MT-CYB) from Chilabothrus exsul (Abaco Island boa).